Here is an 870-residue protein sequence, read N- to C-terminus: DNA mismatch repair protein MutS (870 aa).

Gly-620 to Ser-627 lines the ATP pocket.

Belongs to the DNA mismatch repair MutS family.

Functionally, this protein is involved in the repair of mismatches in DNA. It is possible that it carries out the mismatch recognition step. This protein has a weak ATPase activity. This chain is DNA mismatch repair protein MutS, found in Acetivibrio thermocellus (strain ATCC 27405 / DSM 1237 / JCM 9322 / NBRC 103400 / NCIMB 10682 / NRRL B-4536 / VPI 7372) (Clostridium thermocellum).